Reading from the N-terminus, the 229-residue chain is Flagellar L-ring protein (229 aa).

The signal sequence occupies residues 1–25 (MKQVRLLPSAAVRAACALAAAALAG). A lipid anchor (N-palmitoyl cysteine) is attached at cysteine 26. Cysteine 26 carries the S-diacylglycerol cysteine lipid modification.

This sequence belongs to the FlgH family. The basal body constitutes a major portion of the flagellar organelle and consists of four rings (L,P,S, and M) mounted on a central rod.

The protein resides in the cell outer membrane. It localises to the bacterial flagellum basal body. Functionally, assembles around the rod to form the L-ring and probably protects the motor/basal body from shearing forces during rotation. This chain is Flagellar L-ring protein, found in Burkholderia multivorans (strain ATCC 17616 / 249).